The chain runs to 532 residues: Muscarinic acetylcholine receptor M5 (532 aa).

Residues 1 to 29 lie on the Extracellular side of the membrane; it reads MEGDSYGNATTINGTPVNHQPLERHRLWE. N8 carries an N-linked (GlcNAc...) asparagine glycan. Residues 30–53 traverse the membrane as a helical segment; the sequence is VITIAAVTAVVSLITIVGNVLVMI. Residues 54–66 are Cytoplasmic-facing; it reads SFKVNSQLKTVNN. Residues 67 to 87 traverse the membrane as a helical segment; the sequence is YYLLSLACADLIIGIFSMNLY. Over 88–104 the chain is Extracellular; it reads TTYILMGRWALGSLACD. Residues 105-126 traverse the membrane as a helical segment; that stretch reads LWLALDYVASNASVMNLLVISF. Residues 127 to 146 lie on the Cytoplasmic side of the membrane; the sequence is DRYFSITRPLTYRAKRTPKR. The chain crosses the membrane as a helical span at residues 147 to 169; it reads AGIMIGLAWLISFILWAPAILCW. The Extracellular portion of the chain corresponds to 170-191; that stretch reads QYLVGKRTVPPDECQIQFLSEP. The helical transmembrane segment at 192-214 threads the bilayer; sequence TITFGTAIAAFYIPVSVMTILYC. The Cytoplasmic portion of the chain corresponds to 215–443; sequence RIYRETEKRT…LVKERKAAQT (229 aa). The disordered stretch occupies residues 263–294; that stretch reads QRERNQASRSSSHRSTSITGKPSQATGPSTNW. The span at 270–279 shows a compositional bias: low complexity; that stretch reads SRSSSHRSTS. Residues 280-294 show a composition bias toward polar residues; sequence ITGKPSQATGPSTNW. Residues 444-464 traverse the membrane as a helical segment; that stretch reads LSAILLAFIITWTPYNIMVLV. Residues 465–478 are Extracellular-facing; that stretch reads STFCDKCVPVALWH. Residues 479–498 traverse the membrane as a helical segment; that stretch reads LGYWLCYVNSTVNPICYALC. At 499 to 532 the chain is on the cytoplasmic side; the sequence is NRTFRKTFKMLLLCQWKKKKVEEKLYWQGNSKLP. Phosphothreonine is present on residues T501 and T505.

This sequence belongs to the G-protein coupled receptor 1 family. Muscarinic acetylcholine receptor subfamily. CHRM5 sub-subfamily.

Its subcellular location is the cell membrane. It is found in the postsynaptic cell membrane. Functionally, the muscarinic acetylcholine receptor mediates various cellular responses, including inhibition of adenylate cyclase, breakdown of phosphoinositides and modulation of potassium channels through the action of G proteins. Primary transducing effect is Pi turnover. The protein is Muscarinic acetylcholine receptor M5 (CHRM5) of Saimiri boliviensis boliviensis (Bolivian squirrel monkey).